We begin with the raw amino-acid sequence, 544 residues long: MRLAYWMYEGTAHHGVGRIANSMRNVHAVFHAPQGDDYVNAIFAMLERSPNFPAMTTSVVSGTDLARGTIRLPDTLKQVEERVHPDLIIVVASCSTILLQENLEIAAQHAGLQCEVMVYDANPYRMQEIVAAESLFTDLVKRFAKPQPRTERPTVNILGPASLGFHARHDLISLRRMLKTLGVEINVVAPWGASIADLRRLPAAWLTIAPYRELGLRAATYLEEQFGVPALLDAPIGVQPTLRWIERLRELLAQAGADIPMPPLTAFSLDGLSAPSAVPWLARTADMDSFSGKPAFVFGDATHVVGVTRFLHDELGMPIAGAGTYVKHQADWVREQLAGYVDEVLVTDEFQTVAARIAALRPELVCGTQMERHTSRRYDLNCMVISPPTHIENHLLAYRPFLGFDGADVIADEVYTTCTLGMEKHLIDLFGDAGLELPEKAKNGSAQAVEPAPAAVTVESPKPEQEPAVATVAVSGPTPAVAAPPAPAAPVDPVWAADAEAMLKKVPFFVRGRVRGNVERYARQHGHAVITAQVLLAAKEELGA.

D36 provides a ligand contact to [4Fe-4S] cluster. The active-site Proton donor is D286. 421-422 (GM) serves as a coordination point for substrate.

This sequence belongs to the ChlB/BchB/BchZ family. As to quaternary structure, protochlorophyllide reductase is composed of three subunits; BchL, BchN and BchB. Forms a heterotetramer of two BchB and two BchN subunits. It depends on [4Fe-4S] cluster as a cofactor.

The catalysed reaction is chlorophyllide a + oxidized 2[4Fe-4S]-[ferredoxin] + 2 ADP + 2 phosphate = protochlorophyllide a + reduced 2[4Fe-4S]-[ferredoxin] + 2 ATP + 2 H2O. The protein operates within porphyrin-containing compound metabolism; bacteriochlorophyll biosynthesis (light-independent). In terms of biological role, component of the dark-operative protochlorophyllide reductase (DPOR) that uses Mg-ATP and reduced ferredoxin to reduce ring D of protochlorophyllide (Pchlide) to form chlorophyllide a (Chlide). This reaction is light-independent. The NB-protein (BchN-BchB) is the catalytic component of the complex. The chain is Light-independent protochlorophyllide reductase subunit B from Chloroflexus aggregans (strain MD-66 / DSM 9485).